The sequence spans 1007 residues: Probable inorganic carbon transporter subunit DabA (1007 aa).

Zn(2+) is bound by residues C442, D444, H696, and C711.

This sequence belongs to the inorganic carbon transporter (TC 9.A.2) DabA family. Forms a complex with DabB. Requires Zn(2+) as cofactor.

It localises to the cell inner membrane. In terms of biological role, part of an energy-coupled inorganic carbon pump. The sequence is that of Probable inorganic carbon transporter subunit DabA from Aquifex aeolicus (strain VF5).